The primary structure comprises 641 residues: 1-deoxy-D-xylulose-5-phosphate synthase (641 aa).

Thiamine diphosphate is bound by residues H78 and 119–121 (AHS). D150 is a binding site for Mg(2+). Thiamine diphosphate-binding positions include 151 to 152 (GA), N179, Y288, and E370. N179 lines the Mg(2+) pocket.

This sequence belongs to the transketolase family. DXPS subfamily. In terms of assembly, homodimer. Requires Mg(2+) as cofactor. Thiamine diphosphate serves as cofactor.

The catalysed reaction is D-glyceraldehyde 3-phosphate + pyruvate + H(+) = 1-deoxy-D-xylulose 5-phosphate + CO2. It participates in metabolic intermediate biosynthesis; 1-deoxy-D-xylulose 5-phosphate biosynthesis; 1-deoxy-D-xylulose 5-phosphate from D-glyceraldehyde 3-phosphate and pyruvate: step 1/1. Functionally, catalyzes the acyloin condensation reaction between C atoms 2 and 3 of pyruvate and glyceraldehyde 3-phosphate to yield 1-deoxy-D-xylulose-5-phosphate (DXP). The chain is 1-deoxy-D-xylulose-5-phosphate synthase from Azorhizobium caulinodans (strain ATCC 43989 / DSM 5975 / JCM 20966 / LMG 6465 / NBRC 14845 / NCIMB 13405 / ORS 571).